The sequence spans 325 residues: Transaldolase (325 aa).

The active-site Schiff-base intermediate with substrate is the Lys-125.

This sequence belongs to the transaldolase family. Type 2 subfamily.

The protein localises to the cytoplasm. The catalysed reaction is D-sedoheptulose 7-phosphate + D-glyceraldehyde 3-phosphate = D-erythrose 4-phosphate + beta-D-fructose 6-phosphate. It participates in carbohydrate degradation; pentose phosphate pathway; D-glyceraldehyde 3-phosphate and beta-D-fructose 6-phosphate from D-ribose 5-phosphate and D-xylulose 5-phosphate (non-oxidative stage): step 2/3. Functionally, transaldolase is important for the balance of metabolites in the pentose-phosphate pathway. The polypeptide is Transaldolase (Campylobacter jejuni subsp. jejuni serotype O:6 (strain 81116 / NCTC 11828)).